The chain runs to 253 residues: Triosephosphate isomerase (253 aa).

9-11 provides a ligand contact to substrate; that stretch reads NWK. The active-site Electrophile is His-97. The Proton acceptor role is filled by Glu-169. Substrate-binding positions include Gly-175, Ser-215, and 236-237; that span reads GG.

It belongs to the triosephosphate isomerase family. As to quaternary structure, homodimer.

It localises to the cytoplasm. It catalyses the reaction D-glyceraldehyde 3-phosphate = dihydroxyacetone phosphate. It participates in carbohydrate biosynthesis; gluconeogenesis. The protein operates within carbohydrate degradation; glycolysis; D-glyceraldehyde 3-phosphate from glycerone phosphate: step 1/1. Involved in the gluconeogenesis. Catalyzes stereospecifically the conversion of dihydroxyacetone phosphate (DHAP) to D-glyceraldehyde-3-phosphate (G3P). This chain is Triosephosphate isomerase, found in Staphylococcus haemolyticus (strain JCSC1435).